Here is a 247-residue protein sequence, read N- to C-terminus: 5-oxoprolinase subunit A (247 aa).

Belongs to the LamB/PxpA family. In terms of assembly, forms a complex composed of PxpA, PxpB and PxpC.

The catalysed reaction is 5-oxo-L-proline + ATP + 2 H2O = L-glutamate + ADP + phosphate + H(+). Catalyzes the cleavage of 5-oxoproline to form L-glutamate coupled to the hydrolysis of ATP to ADP and inorganic phosphate. The polypeptide is 5-oxoprolinase subunit A (Vibrio vulnificus (strain CMCP6)).